Consider the following 268-residue polypeptide: MDRYQATFERLAAQKQGAFVPFVTVCDPNPELSLKIMDTLVQAGADALELGIPFSDPLADGPTIQGANIRALDSGATPDICFDLIGQIRAKYPDLPIGLLMYANLVYSRGIENFYQRCAQAGIDSVLIADVPTNESAEFVAAAEKFGVHPIFIAPPTASDETLKQVSQLGGGYTYLLSRAGVTGAETKANMPVGDMLAKLEQFNAPPALLGFGISEPEQVKQAIDAGAAGAISGSAVVKIIESHLNEPDAMLTALANFVSSMKSATQK.

Residues Glu49 and Asp60 each act as proton acceptor in the active site.

This sequence belongs to the TrpA family. Tetramer of two alpha and two beta chains.

It catalyses the reaction (1S,2R)-1-C-(indol-3-yl)glycerol 3-phosphate + L-serine = D-glyceraldehyde 3-phosphate + L-tryptophan + H2O. It participates in amino-acid biosynthesis; L-tryptophan biosynthesis; L-tryptophan from chorismate: step 5/5. Functionally, the alpha subunit is responsible for the aldol cleavage of indoleglycerol phosphate to indole and glyceraldehyde 3-phosphate. This Vibrio vulnificus (strain YJ016) protein is Tryptophan synthase alpha chain.